Consider the following 112-residue polypeptide: 2Fe-2S ferredoxin (112 aa).

One can recognise a 2Fe-2S ferredoxin-type domain in the interval 5-107 (IKVTFIINDG…GIKVRIPATT (103 aa)). Residues cysteine 42, cysteine 48, cysteine 51, and cysteine 88 each coordinate [2Fe-2S] cluster.

It belongs to the adrenodoxin/putidaredoxin family. [2Fe-2S] cluster is required as a cofactor.

In terms of biological role, ferredoxin are iron-sulfur proteins that transfer electrons in a wide variety of metabolic reactions. The sequence is that of 2Fe-2S ferredoxin (fdxB) from Rickettsia conorii (strain ATCC VR-613 / Malish 7).